The chain runs to 360 residues: Phospho-N-acetylmuramoyl-pentapeptide-transferase (360 aa).

10 helical membrane-spanning segments follow: residues 26–46 (AILG…KLIE), 74–94 (MGGL…GDLG), 97–117 (YVWV…IDDY), 132–152 (WKYI…YTTA), 168–188 (VMPQ…VGSS), 199–219 (GLAI…AYLS), 236–256 (SGEL…FLWF), 263–283 (VFMG…IAVL), 288–308 (ILLV…ILQV), and 338–358 (VIVR…ATLK).

The protein belongs to the glycosyltransferase 4 family. MraY subfamily. Mg(2+) serves as cofactor.

It is found in the cell inner membrane. The catalysed reaction is UDP-N-acetyl-alpha-D-muramoyl-L-alanyl-gamma-D-glutamyl-meso-2,6-diaminopimeloyl-D-alanyl-D-alanine + di-trans,octa-cis-undecaprenyl phosphate = di-trans,octa-cis-undecaprenyl diphospho-N-acetyl-alpha-D-muramoyl-L-alanyl-D-glutamyl-meso-2,6-diaminopimeloyl-D-alanyl-D-alanine + UMP. It participates in cell wall biogenesis; peptidoglycan biosynthesis. Its function is as follows. Catalyzes the initial step of the lipid cycle reactions in the biosynthesis of the cell wall peptidoglycan: transfers peptidoglycan precursor phospho-MurNAc-pentapeptide from UDP-MurNAc-pentapeptide onto the lipid carrier undecaprenyl phosphate, yielding undecaprenyl-pyrophosphoryl-MurNAc-pentapeptide, known as lipid I. The chain is Phospho-N-acetylmuramoyl-pentapeptide-transferase from Shewanella sp. (strain ANA-3).